We begin with the raw amino-acid sequence, 249 residues long: Inner membrane protein pE248R (249 aa).

Gly2 carries N-myristoyl glycine; by host lipidation. At 2–199 (GGSTSKNSFK…ADAISAVFKN (198 aa)) the chain is on the cytoplasmic side. A helical transmembrane segment spans residues 200-220 (IMVAAVVIVVIIVGFIAVFYF). Topologically, residues 221 to 249 (LHSRHRHEEEEEAEPLITSKILKNAAVSQ) are extracellular.

This sequence belongs to the asfivirus E248R family. Interacts with A151R.

The protein resides in the host membrane. Its subcellular location is the virion membrane. Its function is as follows. Essential for viral fusion with host endosomal membrane and core release. The chain is Inner membrane protein pE248R from African swine fever virus (isolate Pig/Kenya/KEN-50/1950) (ASFV).